The following is a 711-amino-acid chain: Long-chain-fatty-acid--CoA ligase 4 (711 aa).

Residues 8–28 (LTIVLLPVHLLITIYSALIFI) traverse the membrane as a helical; Signal-anchor for type III membrane protein segment. Residues 29 to 711 (PWYFLTNAKK…KDIERMYGGK (683 aa)) lie on the Cytoplasmic side of the membrane. At S447 the chain carries Phosphoserine.

The protein belongs to the ATP-dependent AMP-binding enzyme family. The cofactor is Mg(2+).

Its subcellular location is the mitochondrion outer membrane. It localises to the peroxisome membrane. The protein localises to the microsome membrane. It is found in the endoplasmic reticulum membrane. The protein resides in the cell membrane. The catalysed reaction is a long-chain fatty acid + ATP + CoA = a long-chain fatty acyl-CoA + AMP + diphosphate. The enzyme catalyses (5Z,8Z,11Z,14Z)-eicosatetraenoate + ATP + CoA = (5Z,8Z,11Z,14Z)-eicosatetraenoyl-CoA + AMP + diphosphate. It catalyses the reaction 15-hydroxy-(5Z,8Z,11Z,13E)-eicosatetraenoate + ATP + CoA = 15-hydroxy-(5Z,8Z,11Z,13E)-eicosatetraenoyl-CoA + AMP + diphosphate. It carries out the reaction 12-hydroxy-(5Z,8Z,10E,14Z)-eicosatetraenoate + ATP + CoA = 12-hydroxy-(5Z,8Z,10E,14Z)-eicosatetraenoyl-CoA + AMP + diphosphate. The catalysed reaction is 5-hydroxy-(6E,8Z,11Z,14Z)-eicosatetraenoate + ATP + CoA = 5-hydroxy-(6E,8Z,11Z,14Z)-eicosatetraenoyl-CoA + AMP + diphosphate. The enzyme catalyses 5,6-epoxy-(8Z,11Z,14Z)-eicosatrienoate + ATP + CoA = 5,6-epoxy-(8Z,11Z,14Z)-eicosatrienoyl-CoA + AMP + diphosphate. It catalyses the reaction 14,15-epoxy-(5Z,8Z,11Z)-eicosatrienoate + ATP + CoA = 14,15-epoxy-(5Z,8Z,11Z)-eicosatrienoyl-CoA + AMP + diphosphate. It carries out the reaction 11,12-epoxy-(5Z,8Z,14Z)-eicosatrienoate + ATP + CoA = 11,12-epoxy-(5Z,8Z,14Z)-eicosatrienoyl-CoA + AMP + diphosphate. The catalysed reaction is 8,9-epoxy-(5Z,11Z,14Z)-eicosatrienoate + ATP + CoA = 8,9-epoxy-(5Z,11Z,14Z)-eicosatrienoyl-CoA + AMP + diphosphate. The enzyme catalyses hexadecanoate + ATP + CoA = hexadecanoyl-CoA + AMP + diphosphate. It catalyses the reaction (E)-hexadec-2-enoate + ATP + CoA = (2E)-hexadecenoyl-CoA + AMP + diphosphate. Both triacsin C and rosiglitazone inhibit arachidonoyl-CoA ligase activity. Catalyzes the conversion of long-chain fatty acids to their active form acyl-CoA for both synthesis of cellular lipids, and degradation via beta-oxidation. Preferentially activates arachidonate and eicosapentaenoate as substrates. Preferentially activates 8,9-EET &gt; 14,15-EET &gt; 5,6-EET &gt; 11,12-EET. Modulates glucose-stimulated insulin secretion by regulating the levels of unesterified EETs. Modulates prostaglandin E2 secretion. The protein is Long-chain-fatty-acid--CoA ligase 4 (Acsl4) of Rattus norvegicus (Rat).